Reading from the N-terminus, the 241-residue chain is ATP synthase subunit a (241 aa).

The next 5 membrane-spanning stretches (helical) occupy residues Gly-30 to Gly-50, Phe-91 to Trp-111, Ile-128 to Ser-148, Leu-193 to Leu-213, and Gly-214 to Gly-234.

The protein belongs to the ATPase A chain family. In terms of assembly, F-type ATPases have 2 components, CF(1) - the catalytic core - and CF(0) - the membrane proton channel. CF(1) has five subunits: alpha(3), beta(3), gamma(1), delta(1), epsilon(1). CF(0) has four main subunits: a, b, b' and c.

The protein localises to the cellular thylakoid membrane. Functionally, key component of the proton channel; it plays a direct role in the translocation of protons across the membrane. This Prochlorococcus marinus (strain MIT 9211) protein is ATP synthase subunit a.